A 303-amino-acid chain; its full sequence is UDP-3-O-acyl-N-acetylglucosamine deacetylase (303 aa).

Zn(2+) contacts are provided by His78, His237, and Asp241. His264 (proton donor) is an active-site residue.

This sequence belongs to the LpxC family. It depends on Zn(2+) as a cofactor.

The catalysed reaction is a UDP-3-O-[(3R)-3-hydroxyacyl]-N-acetyl-alpha-D-glucosamine + H2O = a UDP-3-O-[(3R)-3-hydroxyacyl]-alpha-D-glucosamine + acetate. It participates in glycolipid biosynthesis; lipid IV(A) biosynthesis; lipid IV(A) from (3R)-3-hydroxytetradecanoyl-[acyl-carrier-protein] and UDP-N-acetyl-alpha-D-glucosamine: step 2/6. Functionally, catalyzes the hydrolysis of UDP-3-O-myristoyl-N-acetylglucosamine to form UDP-3-O-myristoylglucosamine and acetate, the committed step in lipid A biosynthesis. The polypeptide is UDP-3-O-acyl-N-acetylglucosamine deacetylase (Pseudomonas putida (strain ATCC 700007 / DSM 6899 / JCM 31910 / BCRC 17059 / LMG 24140 / F1)).